Reading from the N-terminus, the 317-residue chain is Ribosomal protein L11 methyltransferase (317 aa).

Residues T158, G179, D201, and N244 each contribute to the S-adenosyl-L-methionine site.

This sequence belongs to the methyltransferase superfamily. PrmA family.

Its subcellular location is the cytoplasm. It catalyses the reaction L-lysyl-[protein] + 3 S-adenosyl-L-methionine = N(6),N(6),N(6)-trimethyl-L-lysyl-[protein] + 3 S-adenosyl-L-homocysteine + 3 H(+). Functionally, methylates ribosomal protein L11. This chain is Ribosomal protein L11 methyltransferase, found in Streptococcus pyogenes serotype M28 (strain MGAS6180).